The following is a 178-amino-acid chain: Thymidine kinase (178 aa).

G13–S20 contacts ATP. The active-site Proton acceptor is the E85. F115 contacts substrate. Zn(2+)-binding residues include C140 and C143. I159 to G163 provides a ligand contact to substrate. Residues C172 and C175 each contribute to the Zn(2+) site.

Belongs to the thymidine kinase family.

The catalysed reaction is thymidine + ATP = dTMP + ADP + H(+). This Myxoma virus (strain Lausanne) (MYXV) protein is Thymidine kinase (TK).